Reading from the N-terminus, the 264-residue chain is Phycocyanobilin:ferredoxin oxidoreductase (264 aa).

The protein belongs to the HY2 family.

The catalysed reaction is (2R,3Z)-phycocyanobilin + 4 oxidized [2Fe-2S]-[ferredoxin] = biliverdin IXalpha + 4 reduced [2Fe-2S]-[ferredoxin] + 4 H(+). In terms of biological role, catalyzes the four-electron reduction of biliverdin IX-alpha (2-electron reduction at both the A and D rings); the reaction proceeds via an isolatable 2-electron intermediate, 181,182-dihydrobiliverdin. This is Phycocyanobilin:ferredoxin oxidoreductase (pcyA) from Prochlorococcus marinus (strain MIT 9313).